A 133-amino-acid polypeptide reads, in one-letter code: ATP synthase epsilon chain, chloroplastic (133 aa).

It belongs to the ATPase epsilon chain family. As to quaternary structure, F-type ATPases have 2 components, CF(1) - the catalytic core - and CF(0) - the membrane proton channel. CF(1) has five subunits: alpha(3), beta(3), gamma(1), delta(1), epsilon(1). CF(0) has three main subunits: a, b and c.

Its subcellular location is the plastid. The protein resides in the chloroplast thylakoid membrane. In terms of biological role, produces ATP from ADP in the presence of a proton gradient across the membrane. The chain is ATP synthase epsilon chain, chloroplastic from Solanum lycopersicum (Tomato).